Reading from the N-terminus, the 357-residue chain is MAEFVRAQIFGTTFEITSRYTDLQPVGMGAFGLVCSAKDQLTGQAVAVKKIMKPFSTPVLSKRTYRELKLLKHLKHENVISLSDIFISPLEDIYFVTELLGTDLHRLLTSRPLEKQFIQYFLYQILRGLKYVHSAGVVHRDLKPSNILVNENCDLKICDFGLARIQDPQMTGYVSTRYYRAPEIMLTWQKYDVEVDIWSAGCIFAEMLEGKPLFPGKDHVNQFSIITDLLGTPPDDVISTICSENTLRFVQSLPKRERQPLKNKFKNADPQAIELLERMLVFDPRKRVKAGEALADPYLSPYHDPTDEPEAEEKFDWSFNDADLPVDTWKIMMYSEILDYHNVDSANNGEGQENGGA.

In terms of domain architecture, Protein kinase spans 20-299; the sequence is YTDLQPVGMG…AGEALADPYL (280 aa). ATP contacts are provided by residues 26-34 and Lys49; that span reads VGMGAFGLV. The active-site Proton acceptor is Asp141. At Thr171 the chain carries Phosphothreonine. The TXY signature appears at 171–173; the sequence is TGY. The residue at position 173 (Tyr173) is a Phosphotyrosine.

The protein belongs to the protein kinase superfamily. Ser/Thr protein kinase family. MAP kinase subfamily. HOG1 sub-subfamily. Mg(2+) serves as cofactor. In terms of processing, dually phosphorylated on Thr-171 and Tyr-173, which activates the enzyme.

The protein localises to the cytoplasm. It is found in the nucleus. It catalyses the reaction L-seryl-[protein] + ATP = O-phospho-L-seryl-[protein] + ADP + H(+). The catalysed reaction is L-threonyl-[protein] + ATP = O-phospho-L-threonyl-[protein] + ADP + H(+). Its activity is regulated as follows. Activated by tyrosine and threonine phosphorylation. Functionally, proline-directed serine/threonine-protein kinase involved in a signal transduction pathway that is activated by changes in the osmolarity of the extracellular environment. Controls osmotic regulation of transcription of target genes. This Zymoseptoria tritici (strain CBS 115943 / IPO323) (Speckled leaf blotch fungus) protein is Mitogen-activated protein kinase Hog1 (Hog1).